The primary structure comprises 257 residues: Steroid 5-alpha-reductase DET2 (257 aa).

Helical transmembrane passes span 11-31 (FIVF…QFFT), 47-67 (ISPP…TIIV), 78-97 (LAFL…TIIY), 110-130 (FPLN…YIQS), 151-171 (IGLV…GVLL), and 200-220 (IMEW…AFFV).

It belongs to the steroid 5-alpha reductase family. In terms of tissue distribution, mostly expressed in leaves and hypocotyls and, to a lower extent, in stems, cotyledons, roots, seeds and callus.

The protein localises to the membrane. It catalyses the reaction a 3-oxo-5alpha-steroid + NADP(+) = a 3-oxo-Delta(4)-steroid + NADPH + H(+). It participates in plant hormone biosynthesis; brassinosteroid biosynthesis. Its activity is regulated as follows. Repressed by steroid (4-MA, VG106, PD91, PD17, Finasteride) and non-steroid (AS601811, AFA27, AFA76, AFA131, AFA192) inhibitors; steroid inhibitors are generally more efficient. Its function is as follows. Involved in a reduction step in the biosynthesis of the plant steroid, brassinolide (BL). Can use progesterone, testosterone, androstenedione and campestenone as substrate. The chain is Steroid 5-alpha-reductase DET2 from Solanum lycopersicum (Tomato).